Consider the following 147-residue polypeptide: MAKEVAGLIKLQIKGGAANPSPPVGPALGSKGINIMEFCKQFNARTQDKAGKILPVIITYYADKSFDFVIKTPPVAIQLLEVAKVKSGSAEPNRKKVAELTWEQIRTIAQDKMVDLNCFTVDAAMRMVAGTARSMGIAVKGEFPVNN.

Belongs to the universal ribosomal protein uL11 family. Part of the ribosomal stalk of the 50S ribosomal subunit. Interacts with L10 and the large rRNA to form the base of the stalk. L10 forms an elongated spine to which L12 dimers bind in a sequential fashion forming a multimeric L10(L12)X complex. One or more lysine residues are methylated.

Functionally, forms part of the ribosomal stalk which helps the ribosome interact with GTP-bound translation factors. In Bacteroides thetaiotaomicron (strain ATCC 29148 / DSM 2079 / JCM 5827 / CCUG 10774 / NCTC 10582 / VPI-5482 / E50), this protein is Large ribosomal subunit protein uL11.